The primary structure comprises 661 residues: Transmembrane and coiled-coil domain-containing protein STS1 (661 aa).

Disordered stretches follow at residues Ala34–Ala71 and Val154–Leu185. The segment covering Ser59–Ala69 has biased composition (low complexity). Residues Ser175–Gln184 show a composition bias toward basic and acidic residues. 4 helical membrane-spanning segments follow: residues Ala306–Leu326, Leu333–Ala353, Ser355–Ala375, and Leu466–Ile486.

This sequence belongs to the TMCO4 family. In terms of assembly, interacts with PKS10/PKS2 and 4CLL9/ACOS12.

It is found in the endoplasmic reticulum membrane. Functionally, involved in anther lipids biosynthesis and is required for tapetum degradation and pollen wall formation. Required for the formation of Ubisch bodies and microspores. Possesses lipase activity in vitro toward two synthetic substrates, p-nitrophenyl acetate (pNPA) and p-nitrophenyl butyrate (pNPB). This is Transmembrane and coiled-coil domain-containing protein STS1 from Oryza sativa subsp. japonica (Rice).